Here is a 162-residue protein sequence, read N- to C-terminus: Large ribosomal subunit protein uL10 (162 aa).

This sequence belongs to the universal ribosomal protein uL10 family. As to quaternary structure, part of the ribosomal stalk of the 50S ribosomal subunit. The N-terminus interacts with L11 and the large rRNA to form the base of the stalk. The C-terminus forms an elongated spine to which L12 dimers bind in a sequential fashion forming a multimeric L10(L12)X complex.

Functionally, forms part of the ribosomal stalk, playing a central role in the interaction of the ribosome with GTP-bound translation factors. The polypeptide is Large ribosomal subunit protein uL10 (Aliarcobacter butzleri (strain RM4018) (Arcobacter butzleri)).